A 245-amino-acid polypeptide reads, in one-letter code: MAGLELLSDQGYRVDGRRAGELRKIQARMGVFAQADGSAYIEQGNTKALAVVYGPHEIRGSRARALPDRALVNCQYSSATFSTGERKRRPHGDRKSCEMGLQLRQTFEAAILTQLHPRSQIDIYVQVLQADGGTYAACVNAATLAVLDAGIPMRDFVCACSAGFVDGTALADLSHVEEAAGGPQLALALLPASGQIALLEMDARLHEDHLERVLEAAAQAARDVHTLLDRVVRQHVREASILLGD.

Alanine 2 is subject to N-acetylalanine.

The protein belongs to the RNase PH family. Component of the RNA exosome core complex (Exo-9), composed of EXOSC1, EXOSC2, EXOSC3, EXOSC4, EXOSC5, EXOSC6, EXOSC7, EXOSC8 and EXOSC9; within the complex interacts with EXOSC2, EXOSC7 and EXOSC9. The catalytically inactive RNA exosome core complex (Exo-9) associates with the catalytic subunit EXOSC10/RRP6. Exo-9 may associate with DIS3 to form the nucleolar exosome complex, or DIS3L to form the cytoplasmic exosome complex. Exo-9 is formed by a hexameric base ring consisting of the heterodimers EXOSC4-EXOSC9, EXOSC5-EXOSC8 and EXOSC6-EXOSC7, and a cap ring consisting of EXOSC1, EXOSC2 and EXOSC3. The RNA exosome complex associates with cofactors C1D/RRP47, MPHOSPH6/MPP6 and MTREX/MTR4. Interacts with DDX60. Interacts with DIS3; the interaction is direct.

Its subcellular location is the cytoplasm. The protein resides in the nucleus. It is found in the nucleolus. It localises to the nucleoplasm. Functionally, non-catalytic component of the RNA exosome complex which has 3'-&gt;5' exoribonuclease activity and participates in a multitude of cellular RNA processing and degradation events. In the nucleus, the RNA exosome complex is involved in proper maturation of stable RNA species such as rRNA, snRNA and snoRNA, in the elimination of RNA processing by-products and non-coding 'pervasive' transcripts, such as antisense RNA species and promoter-upstream transcripts (PROMPTs), and of mRNAs with processing defects, thereby limiting or excluding their export to the cytoplasm. The RNA exosome may be involved in Ig class switch recombination (CSR) and/or Ig variable region somatic hypermutation (SHM) by targeting AICDA deamination activity to transcribed dsDNA substrates. In the cytoplasm, the RNA exosome complex is involved in general mRNA turnover and specifically degrades inherently unstable mRNAs containing AU-rich elements (AREs) within their 3' untranslated regions, and in RNA surveillance pathways, preventing translation of aberrant mRNAs. It seems to be involved in degradation of histone mRNA. The catalytic inactive RNA exosome core complex of 9 subunits (Exo-9) is proposed to play a pivotal role in the binding and presentation of RNA for ribonucleolysis, and to serve as a scaffold for the association with catalytic subunits and accessory proteins or complexes. EXOSC4 binds to ARE-containing RNAs. This Homo sapiens (Human) protein is Exosome complex component RRP41 (EXOSC4).